The following is a 483-amino-acid chain: Regulatory protein ViaA (483 aa).

This sequence belongs to the ViaA family. Homodimer. Interacts with RavA.

The protein localises to the cytoplasm. Its function is as follows. Component of the RavA-ViaA chaperone complex, which may act on the membrane to optimize the function of some of the respiratory chains. ViaA stimulates the ATPase activity of RavA. This Salmonella choleraesuis (strain SC-B67) protein is Regulatory protein ViaA.